A 465-amino-acid chain; its full sequence is UDP-N-acetylmuramate--L-alanine ligase (465 aa).

112-118 (GTHGKTT) contributes to the ATP binding site.

Belongs to the MurCDEF family.

Its subcellular location is the cytoplasm. The enzyme catalyses UDP-N-acetyl-alpha-D-muramate + L-alanine + ATP = UDP-N-acetyl-alpha-D-muramoyl-L-alanine + ADP + phosphate + H(+). The protein operates within cell wall biogenesis; peptidoglycan biosynthesis. In terms of biological role, cell wall formation. The polypeptide is UDP-N-acetylmuramate--L-alanine ligase (Burkholderia vietnamiensis (strain G4 / LMG 22486) (Burkholderia cepacia (strain R1808))).